The primary structure comprises 237 residues: Uridylate kinase (237 aa).

12–15 (KLSG) lines the ATP pocket. Residues 20–25 (GEDGLG) are involved in allosteric activation by GTP. Residue Gly-54 coordinates UMP. ATP is bound by residues Gly-55 and Arg-59. UMP is bound by residues Asp-74 and 135–142 (TGNPFFTT). Positions 162, 168, and 171 each coordinate ATP.

It belongs to the UMP kinase family. As to quaternary structure, homohexamer.

It is found in the cytoplasm. It carries out the reaction UMP + ATP = UDP + ADP. It functions in the pathway pyrimidine metabolism; CTP biosynthesis via de novo pathway; UDP from UMP (UMPK route): step 1/1. With respect to regulation, allosterically activated by GTP. Inhibited by UTP. Functionally, catalyzes the reversible phosphorylation of UMP to UDP. The polypeptide is Uridylate kinase (Haemophilus influenzae (strain PittGG)).